The primary structure comprises 143 residues: MAKKIEAYIKLQVKAGQANPSPPVGPALGQHGVNIMEFCKAFNAQTQGIEPGSPVPVVISVYSDRSFTFAMKTPPASFLLKRAAGIKSGSGRPNTEKVGKVNRAQLEEIATTKMPDLTAADMDAAVRTIAGSARAMGLDVEGV.

This sequence belongs to the universal ribosomal protein uL11 family. In terms of assembly, part of the ribosomal stalk of the 50S ribosomal subunit. Interacts with L10 and the large rRNA to form the base of the stalk. L10 forms an elongated spine to which L12 dimers bind in a sequential fashion forming a multimeric L10(L12)X complex. Post-translationally, one or more lysine residues are methylated.

Its function is as follows. Forms part of the ribosomal stalk which helps the ribosome interact with GTP-bound translation factors. This chain is Large ribosomal subunit protein uL11, found in Teredinibacter turnerae (strain ATCC 39867 / T7901).